The following is an 860-amino-acid chain: Ribosome-releasing factor 2, mitochondrial (860 aa).

The tr-type G domain occupies Asp45–Leu337. GTP-binding positions include Ala54 to Thr61, Asp118 to His122, and Asn172 to Asp175.

Belongs to the TRAFAC class translation factor GTPase superfamily. Classic translation factor GTPase family. EF-G/EF-2 subfamily.

Its subcellular location is the mitochondrion. In terms of biological role, mitochondrial GTPase that mediates the disassembly of ribosomes from messenger RNA at the termination of mitochondrial protein biosynthesis. Not involved in the GTP-dependent ribosomal translocation step during translation elongation. The polypeptide is Ribosome-releasing factor 2, mitochondrial (Debaryomyces hansenii (strain ATCC 36239 / CBS 767 / BCRC 21394 / JCM 1990 / NBRC 0083 / IGC 2968) (Yeast)).